A 379-amino-acid chain; its full sequence is D-threonine aldolase (379 aa).

The residue at position 59 (Lys59) is an N6-(pyridoxal phosphate)lysine.

This sequence belongs to the DSD1 family. The cofactor is pyridoxal 5'-phosphate. Mn(2+) is required as a cofactor. It depends on Co(2+) as a cofactor. Requires Ni(2+) as cofactor. Mg(2+) serves as cofactor.

The catalysed reaction is D-threonine = acetaldehyde + glycine. The enzyme catalyses D-allo-threonine = acetaldehyde + glycine. Its activity is regulated as follows. Inhibited by the carbonyl reagents hydroxylamine, phenylhydrazine and semicarbazide. Inhibited by the chelating agent EDTA. Inhibited by the sulfhydryl reagent p-chloromercuribenzoic acid, and by sodium cyanide. Inhibited by iodoacetate, Ag(2)SO(4), HgCl(2) and CdCl(2). Competitively inhibited by beta-hydroxyaspartate and O-phospho-DL-threonine. In terms of biological role, catalyzes the reversible cleavage of D-threonine or D-allothreonine into glycine and acetaldehyde. Can also cleave D-beta-phenylserine, D-beta-hydroxy-alpha-aminovaleric acid, D-beta-3,4-dihydroxyphenylserine and D-beta-3,4-methylenedioxyphenylserine into glycine and the corresponding aldehyde compounds. Inactive towards D-serine, beta-hydroxyaspartate and O-phospho-DL-threonine. The protein is D-threonine aldolase of Arthrobacter sp.